A 280-amino-acid polypeptide reads, in one-letter code: Phosphatidylglycerol--prolipoprotein diacylglyceryl transferase (280 aa).

A run of 4 helical transmembrane segments spans residues 12–32, 52–72, 86–106, and 115–133; these read FGPF…LIGL, LLPL…VAFE, IWEG…TLIL, and FWDV…QSIG. R134 serves as a coordination point for a 1,2-diacyl-sn-glycero-3-phospho-(1'-sn-glycerol). Helical transmembrane passes span 173 to 193, 203 to 223, and 246 to 266; these read PTFL…ILLF, LPAG…RVWI, and IAQL…WWLY.

This sequence belongs to the Lgt family.

It is found in the cell inner membrane. It carries out the reaction L-cysteinyl-[prolipoprotein] + a 1,2-diacyl-sn-glycero-3-phospho-(1'-sn-glycerol) = an S-1,2-diacyl-sn-glyceryl-L-cysteinyl-[prolipoprotein] + sn-glycerol 1-phosphate + H(+). The protein operates within protein modification; lipoprotein biosynthesis (diacylglyceryl transfer). In terms of biological role, catalyzes the transfer of the diacylglyceryl group from phosphatidylglycerol to the sulfhydryl group of the N-terminal cysteine of a prolipoprotein, the first step in the formation of mature lipoproteins. The sequence is that of Phosphatidylglycerol--prolipoprotein diacylglyceryl transferase from Synechococcus sp. (strain CC9902).